The sequence spans 531 residues: Peptide chain release factor 3 (531 aa).

The tr-type G domain occupies 13–282; sequence AKRRTFAIIS…TLIKYAPPPK (270 aa). Residues 22–29, 90–94, and 144–147 each bind GTP; these read SHPDAGKT, DTPGH, and NKLD.

The protein belongs to the TRAFAC class translation factor GTPase superfamily. Classic translation factor GTPase family. PrfC subfamily.

The protein localises to the cytoplasm. In terms of biological role, increases the formation of ribosomal termination complexes and stimulates activities of RF-1 and RF-2. It binds guanine nucleotides and has strong preference for UGA stop codons. It may interact directly with the ribosome. The stimulation of RF-1 and RF-2 is significantly reduced by GTP and GDP, but not by GMP. In Psychrobacter cryohalolentis (strain ATCC BAA-1226 / DSM 17306 / VKM B-2378 / K5), this protein is Peptide chain release factor 3.